The sequence spans 637 residues: GTPase-activating protein GYP1 (637 aa).

Basic and acidic residues predominate over residues 1 to 17 (MGVRSAAKEMHERDHNS). 2 disordered regions span residues 1 to 152 (MGVR…GDRY) and 187 to 233 (RTLS…NDSK). Residues 18 to 27 (DSSSLVTSLM) are compositionally biased toward polar residues. Low complexity predominate over residues 28–45 (KSWRISSASSSKKPSLYK). Residues 46 to 59 (MNTTESTSLPSGYA) are compositionally biased toward polar residues. S69 carries the phosphoserine modification. Polar residues-rich tracts occupy residues 79-91 (QQAS…NSYS) and 98-107 (PTLSTASNES). Over residues 115-127 (RQHHQRHHHHQQP) the composition is skewed to basic residues. 2 stretches are compositionally biased toward low complexity: residues 128–142 (RHSS…CSNS) and 187–207 (RTLS…MGTS). The segment covering 208–223 (AVRNSSSSFTYPQLPQ) has biased composition (polar residues). S250 bears the Phosphoserine mark. The region spanning 280-508 (GIPKIHRPVV…RMWDTYLSET (229 aa)) is the Rab-GAP TBC domain. The disordered stretch occupies residues 543 to 564 (DFQSPTTALSNMTPNNAVEDSG).

The protein resides in the golgi apparatus. Its subcellular location is the golgi stack. In terms of biological role, GTPase-activating protein (GAP) that stimulates specifically the intrinsic GTPase activity of Ypt/Rab-type GTPases YPT1 and YPT7. Functions on the Golgi as a negative regulator of YPT1. Functions on the vacuole as a negative regulator of YPT7. It is also active on SEC4 and YPT51. Provides a catalytic arginine (arginine finger) and glutamine (glutamine finger) in trans to accelerate the GTP hydrolysis rate of the substrate GTPase. The polypeptide is GTPase-activating protein GYP1 (GYP1) (Saccharomyces cerevisiae (strain ATCC 204508 / S288c) (Baker's yeast)).